Here is a 171-residue protein sequence, read N- to C-terminus: Peptide methionine sulfoxide reductase MsrA (171 aa).

Cys13 is an active-site residue.

Belongs to the MsrA Met sulfoxide reductase family.

The enzyme catalyses L-methionyl-[protein] + [thioredoxin]-disulfide + H2O = L-methionyl-(S)-S-oxide-[protein] + [thioredoxin]-dithiol. It catalyses the reaction [thioredoxin]-disulfide + L-methionine + H2O = L-methionine (S)-S-oxide + [thioredoxin]-dithiol. Its function is as follows. Has an important function as a repair enzyme for proteins that have been inactivated by oxidation. Catalyzes the reversible oxidation-reduction of methionine sulfoxide in proteins to methionine. The protein is Peptide methionine sulfoxide reductase MsrA of Mycobacterium sp. (strain JLS).